The chain runs to 261 residues: MAAESGKIDPMHQFMIEPLFGQGWSIAGHNIAFTNSAMWMVVTLAALLIFMIGGMKRDLVPGRWQAAVESFTGFVAGMMATNIGPEGKKFTPYVFSLFMFILIANIMGMMPTGVVGVHPFTVTSHLTVTGVLAVISFSIVLVVGFWRHGFHFFSLFVPHGTPGYMIPMIFVIELFSFLIRPFSLGLRLFVAMTAGHILMKVLAGFVINGINAGALTVAIVSIPSFILMIGITLLELLVCAIQAYVFALLTSLYLNDAINLH.

A run of 7 helical transmembrane segments spans residues 31 to 51, 64 to 84, 97 to 117, 126 to 146, 166 to 188, 201 to 223, and 235 to 255; these read IAFT…LIFM, WQAA…TNIG, LFMF…VVGV, LTVT…VGFW, IPMI…GLRL, VLAG…VSIP, and ELLV…LYLN.

This sequence belongs to the ATPase A chain family. In terms of assembly, F-type ATPases have 2 components, CF(1) - the catalytic core - and CF(0) - the membrane proton channel. CF(1) has five subunits: alpha(3), beta(3), gamma(1), delta(1), epsilon(1). CF(0) has three main subunits: a(1), b(2) and c(9-12). The alpha and beta chains form an alternating ring which encloses part of the gamma chain. CF(1) is attached to CF(0) by a central stalk formed by the gamma and epsilon chains, while a peripheral stalk is formed by the delta and b chains.

It is found in the cell inner membrane. Its function is as follows. Key component of the proton channel; it plays a direct role in the translocation of protons across the membrane. The chain is ATP synthase subunit a from Rhizorhabdus wittichii (strain DSM 6014 / CCUG 31198 / JCM 15750 / NBRC 105917 / EY 4224 / RW1) (Sphingomonas wittichii).